The sequence spans 264 residues: Tryptophan synthase alpha chain (264 aa).

Catalysis depends on proton acceptor residues glutamate 44 and aspartate 55.

Belongs to the TrpA family. Tetramer of two alpha and two beta chains.

The enzyme catalyses (1S,2R)-1-C-(indol-3-yl)glycerol 3-phosphate + L-serine = D-glyceraldehyde 3-phosphate + L-tryptophan + H2O. It participates in amino-acid biosynthesis; L-tryptophan biosynthesis; L-tryptophan from chorismate: step 5/5. In terms of biological role, the alpha subunit is responsible for the aldol cleavage of indoleglycerol phosphate to indole and glyceraldehyde 3-phosphate. This chain is Tryptophan synthase alpha chain, found in Lactiplantibacillus plantarum (strain ATCC BAA-793 / NCIMB 8826 / WCFS1) (Lactobacillus plantarum).